We begin with the raw amino-acid sequence, 188 residues long: Elongation factor P (188 aa).

Belongs to the elongation factor P family.

The protein localises to the cytoplasm. It functions in the pathway protein biosynthesis; polypeptide chain elongation. Functionally, involved in peptide bond synthesis. Stimulates efficient translation and peptide-bond synthesis on native or reconstituted 70S ribosomes in vitro. Probably functions indirectly by altering the affinity of the ribosome for aminoacyl-tRNA, thus increasing their reactivity as acceptors for peptidyl transferase. The polypeptide is Elongation factor P (Bradyrhizobium diazoefficiens (strain JCM 10833 / BCRC 13528 / IAM 13628 / NBRC 14792 / USDA 110)).